We begin with the raw amino-acid sequence, 420 residues long: Exodeoxyribonuclease 7 large subunit (420 aa).

The protein belongs to the XseA family. Heterooligomer composed of large and small subunits.

Its subcellular location is the cytoplasm. It catalyses the reaction Exonucleolytic cleavage in either 5'- to 3'- or 3'- to 5'-direction to yield nucleoside 5'-phosphates.. Bidirectionally degrades single-stranded DNA into large acid-insoluble oligonucleotides, which are then degraded further into small acid-soluble oligonucleotides. The chain is Exodeoxyribonuclease 7 large subunit from Helicobacter pylori (strain HPAG1).